The primary structure comprises 211 residues: Protoglabretal synthase MOI1 (211 aa).

Helical transmembrane passes span 16–36, 50–70, 104–124, 135–155, and 179–199; these read ASLH…TWII, LICW…YYVF, VLGI…LAAY, IFQF…FLTA, and IWVI…HAIC. The EXPERA domain maps to 46 to 188; that stretch reads IERLLICWWA…IWVIVPMLIA (143 aa).

This sequence belongs to the EBP family. In terms of tissue distribution, expressed in maturing fruits and in juice vesicles.

It is found in the membrane. It catalyses the reaction 7,8-epoxymelianol = protoglabretal. It functions in the pathway secondary metabolite biosynthesis; terpenoid biosynthesis. In terms of biological role, isomerase involved in the biosynthesis of glabretanes triterpene natural products such as glabretal, a component with in vitro antiproliferative properties on lymphocytes. Catalyzes the conversion of 7,8-epoxymelianol to protoglabretal via skeletal rearrangements. The protein is Protoglabretal synthase MOI1 of Citrus sinensis (Sweet orange).